The chain runs to 379 residues: Beta-1,3-N-acetylglucosaminyltransferase lunatic fringe (379 aa).

Topologically, residues 1 to 8 (MLKRCGRR) are cytoplasmic. A helical; Signal-anchor for type II membrane protein membrane pass occupies residues 9–29 (LLLALAGALLACLLVLTADPP). Residues 30–379 (PPPLPAERGR…TPWCPRTAIF (350 aa)) are Lumenal-facing. The disordered stretch occupies residues 86 to 107 (RDAGPPPGAAPRPADGHPRPLA). R129 serves as a coordination point for substrate. N167 is a glycosylation site (N-linked (GlcNAc...) asparagine). 2 cysteine pairs are disulfide-bonded: C168/C179 and C197/C260. D201 contributes to the substrate binding site. Mn(2+) is bound at residue D202. Residue D290 is part of the active site. Position 314 (H314) interacts with Mn(2+). A disulfide bond links C364 and C373.

It belongs to the glycosyltransferase 31 family. The cofactor is Mn(2+). Requires Co(2+) as cofactor. A soluble form may be derived from the membrane form by proteolytic processing.

It is found in the golgi apparatus. Its subcellular location is the golgi apparatus membrane. It carries out the reaction 3-O-(alpha-L-fucosyl)-L-threonyl-[EGF-like domain protein] + UDP-N-acetyl-alpha-D-glucosamine = 3-O-(N-acetyl-beta-D-glucosaminyl-(1-&gt;3)-alpha-L-fucosyl)-L-threonyl-[EGF-like domain protein] + UDP + H(+). The catalysed reaction is 3-O-(alpha-L-fucosyl)-L-seryl-[EGF-like domain protein] + UDP-N-acetyl-alpha-D-glucosamine = 3-O-(N-acetyl-beta-D-glucosaminyl-(1-&gt;3)-alpha-L-fucosyl)-L-seryl-[EGF-like domain protein] + UDP + H(+). Its function is as follows. Glycosyltransferase that initiates the elongation of O-linked fucose residues attached to EGF-like repeats in the extracellular domain of Notch molecules. Modulates NOTCH1 activity by modifying O-fucose residues at specific EGF-like domains resulting in inhibition of NOTCH1 activation by JAG1 and enhancement of NOTCH1 activation by DLL1 via an increase in its binding to DLL1. Decreases the binding of JAG1 to NOTCH2 but not that of DLL1. Essential mediator of somite segmentation and patterning. In Homo sapiens (Human), this protein is Beta-1,3-N-acetylglucosaminyltransferase lunatic fringe.